Consider the following 284-residue polypeptide: NAD kinase (284 aa).

Asp-65 (proton acceptor) is an active-site residue. Residues 65–66 (DG), 139–140 (ND), Arg-150, Arg-167, Asp-169, and Gln-239 each bind NAD(+).

The protein belongs to the NAD kinase family. A divalent metal cation is required as a cofactor.

The protein resides in the cytoplasm. It catalyses the reaction NAD(+) + ATP = ADP + NADP(+) + H(+). In terms of biological role, involved in the regulation of the intracellular balance of NAD and NADP, and is a key enzyme in the biosynthesis of NADP. Catalyzes specifically the phosphorylation on 2'-hydroxyl of the adenosine moiety of NAD to yield NADP. The sequence is that of NAD kinase from Desulfatibacillum aliphaticivorans.